We begin with the raw amino-acid sequence, 135 residues long: Large ribosomal subunit protein uL16 (135 aa).

It belongs to the universal ribosomal protein uL16 family. As to quaternary structure, part of the 50S ribosomal subunit.

Functionally, binds 23S rRNA and is also seen to make contacts with the A and possibly P site tRNAs. The polypeptide is Large ribosomal subunit protein uL16 (Desulfatibacillum aliphaticivorans).